The sequence spans 311 residues: Cathepsin B (311 aa).

An N-terminal signal peptide occupies residues 1–19 (MRVLLSLVVILFIINSAFA). Residues 20–78 (VKINIGRPTKSHKTIHHETWVEEQTDQFDNIKVGQLLGFKRSPNRPKLQIKSYDPLGVQ) constitute a propeptide that is removed on maturation. Residue asparagine 91 is glycosylated (N-linked (GlcNAc...) asparagine). Disulfide bonds link cysteine 92-cysteine 121, cysteine 104-cysteine 145, cysteine 138-cysteine 191, cysteine 167-cysteine 195, and cysteine 175-cysteine 182. Cysteine 107 is a catalytic residue. The N-linked (GlcNAc...) asparagine glycan is linked to asparagine 198. Catalysis depends on residues histidine 261 and asparagine 281. Asparagine 290 carries an N-linked (GlcNAc...) asparagine glycan.

It belongs to the peptidase C1 family.

It localises to the lysosome. It catalyses the reaction Hydrolysis of proteins with broad specificity for peptide bonds. Preferentially cleaves -Arg-Arg-|-Xaa bonds in small molecule substrates (thus differing from cathepsin L). In addition to being an endopeptidase, shows peptidyl-dipeptidase activity, liberating C-terminal dipeptides.. In terms of biological role, thiol protease which is believed to participate in intracellular degradation and turnover of proteins. This Dictyostelium discoideum (Social amoeba) protein is Cathepsin B (ctsB).